We begin with the raw amino-acid sequence, 305 residues long: Dihydroorotate dehydrogenase A (fumarate) (305 aa).

Residues Ser-21 and 45 to 46 contribute to the FMN site; that span reads KS. Substrate contacts are provided by residues Lys-45, 69-73, and Asn-129; that span reads NAIGL. Position 129 (Asn-129) interacts with FMN. Cys-132 functions as the Nucleophile in the catalytic mechanism. Residues Lys-167 and Ile-193 each contribute to the FMN site. Residue 194–195 participates in substrate binding; it reads NT. FMN is bound by residues Gly-219 and 245–246; that span reads GG.

The protein belongs to the dihydroorotate dehydrogenase family. Type 1 subfamily. In terms of assembly, homodimer. Requires FMN as cofactor.

The protein resides in the cytoplasm. It catalyses the reaction (S)-dihydroorotate + fumarate = orotate + succinate. It functions in the pathway pyrimidine metabolism; UMP biosynthesis via de novo pathway. In terms of biological role, catalyzes the conversion of dihydroorotate to orotate with fumarate as the electron acceptor. The sequence is that of Dihydroorotate dehydrogenase A (fumarate) (pyrD) from Lactiplantibacillus plantarum (strain ATCC BAA-793 / NCIMB 8826 / WCFS1) (Lactobacillus plantarum).